The primary structure comprises 254 residues: NAD-dependent protein deacylase (254 aa).

One can recognise a Deacetylase sirtuin-type domain in the interval 1 to 250 (MERLEEARKR…LPPSPEDQAE (250 aa)). 22–41 (GAGISKPSGIPTFRDAEGLW) serves as a coordination point for NAD(+). Residues Tyr66 and Arg69 each contribute to the substrate site. Position 104–107 (104–107 (QNVD)) interacts with NAD(+). His122 functions as the Proton acceptor in the catalytic mechanism. Zn(2+)-binding residues include Cys130, Cys133, Cys149, and Cys152. NAD(+)-binding positions include 189–191 (GTS), 215–217 (NPE), and Ala233.

This sequence belongs to the sirtuin family. Class III subfamily. Requires Zn(2+) as cofactor.

The protein localises to the cytoplasm. The enzyme catalyses N(6)-acetyl-L-lysyl-[protein] + NAD(+) + H2O = 2''-O-acetyl-ADP-D-ribose + nicotinamide + L-lysyl-[protein]. It catalyses the reaction N(6)-succinyl-L-lysyl-[protein] + NAD(+) + H2O = 2''-O-succinyl-ADP-D-ribose + nicotinamide + L-lysyl-[protein]. In terms of biological role, NAD-dependent lysine deacetylase and desuccinylase that specifically removes acetyl and succinyl groups on target proteins. Modulates the activities of several proteins which are inactive in their acylated form. The protein is NAD-dependent protein deacylase of Thermus thermophilus (strain ATCC BAA-163 / DSM 7039 / HB27).